The chain runs to 803 residues: Nuclear factor of activated T-cells, cytoplasmic 1 (803 aa).

A calcineurin-binding region spans residues 101-106 (PRIEIT). The tract at residues 109-199 (LGLHHNSSQF…CVSPKTTDPE (91 aa)) is transactivation domain A (TAD-A). Residues 181 to 195 (PQTSPWQSPCVSPKT) are compositionally biased toward polar residues. The interval 181–279 (PQTSPWQSPC…GSPRVSVTDD (99 aa)) is disordered. Tandem repeats lie at residues 184 to 200 (SPWQSPCVSPKTTDPEE) and 214 to 230 (SPRHSPSTSPRTSVTEE). The interval 184-279 (SPWQSPCVSP…GSPRVSVTDD (96 aa)) is 3 X SP repeats. 2 positions are modified to phosphoserine: Ser214 and Ser218. Low complexity predominate over residues 214–231 (SPRHSPSTSPRTSVTEES). Ser226 is subject to Phosphoserine; by PKA. Positions 246 to 248 (KRK) match the Nuclear localization signal motif. Copy 3 of the repeat occupies 263 to 279 (SPTPSPQGSPRVSVTDD). Residue Ser275 is modified to Phosphoserine; by PKA. The short motif at 291-302 (SAIVAAINALST) is the Nuclear export signal element. In terms of domain architecture, RHD spans 389-571 (PSLPALDWQL…NPIECSQRSA (183 aa)). A DNA-binding region spans residues 418 to 425 (RAHYETEG). Positions 661–663 (KRK) match the Nuclear localization signal motif. The tract at residues 723–803 (LMPGFPPRPQ…QPQVSPTSSG (81 aa)) is disordered. Residues 778 to 792 (SGVPPGPPQPPPPTL) show a composition bias toward pro residues. The segment covering 793–803 (LQPQVSPTSSG) has biased composition (low complexity).

Member of the multicomponent NFATC transcription complex that consists of at least two components, a pre-existing cytoplasmic component NFATC2 and an inducible nuclear component NFATC1. Other members such as NFATC4, NFATC3 or members of the activating protein-1 family, MAF, GATA4 and Cbp/p300 can also bind the complex. NFATC proteins bind to DNA as monomers. Interacts with HOMER2 and HOMER3; this interaction may compete with calcineurin/PPP3CA-binding and hence prevent NFATC1 dephosphorylation and activation. Interacts with TLE6/GRG6. Phosphorylated by NFATC-kinase and GSK3B; phosphorylation induces NFATC1 nuclear exit and dephosphorylation by calcineurin promotes nuclear import. Phosphorylation by PKA and DYRK2 negatively modulates nuclear accumulation, and promotes subsequent phosphorylation by GSK3B or casein kinase 1.

It is found in the cytoplasm. Its subcellular location is the nucleus. Functionally, plays a role in the inducible expression of cytokine genes in T-cells, especially in the induction of the IL-2 or IL-4 gene transcription. Also controls gene expression in embryonic cardiac cells. Could regulate not only the activation and proliferation but also the differentiation and programmed death of T-lymphocytes as well as lymphoid and non-lymphoid cells. Required for osteoclastogenesis and regulates many genes important for osteoclast differentiation and function. This is Nuclear factor of activated T-cells, cytoplasmic 1 from Bos taurus (Bovine).